A 323-amino-acid chain; its full sequence is Acetyl-coenzyme A carboxylase carboxyl transferase subunit alpha (323 aa).

Residues 39–293 (RLSKKSQQLT…RRALADSLRQ (255 aa)) form the CoA carboxyltransferase C-terminal domain.

Belongs to the AccA family. In terms of assembly, acetyl-CoA carboxylase is a heterohexamer composed of biotin carboxyl carrier protein (AccB), biotin carboxylase (AccC) and two subunits each of ACCase subunit alpha (AccA) and ACCase subunit beta (AccD).

Its subcellular location is the cytoplasm. The enzyme catalyses N(6)-carboxybiotinyl-L-lysyl-[protein] + acetyl-CoA = N(6)-biotinyl-L-lysyl-[protein] + malonyl-CoA. Its pathway is lipid metabolism; malonyl-CoA biosynthesis; malonyl-CoA from acetyl-CoA: step 1/1. Component of the acetyl coenzyme A carboxylase (ACC) complex. First, biotin carboxylase catalyzes the carboxylation of biotin on its carrier protein (BCCP) and then the CO(2) group is transferred by the carboxyltransferase to acetyl-CoA to form malonyl-CoA. This chain is Acetyl-coenzyme A carboxylase carboxyl transferase subunit alpha, found in Burkholderia multivorans (strain ATCC 17616 / 249).